Reading from the N-terminus, the 724-residue chain is Membrane protein YdfJ (724 aa).

The next 12 helical transmembrane spans lie at 17 to 37 (IKAI…AVTL), 179 to 199 (IVGI…LLIA), 200 to 220 (GLPI…VLIG), 231 to 251 (LSLA…FIFT), 277 to 297 (AVVF…VVNI), 309 to 329 (LSVL…LSIA), 360 to 380 (IMLS…SMHL), 512 to 532 (AIPV…TIVF), 539 to 559 (LVAV…CVFV), 575 to 595 (GPIL…LAMD), 627 to 647 (PVVT…IFAG), and 655 to 675 (GLAL…TLIP).

The protein belongs to the resistance-nodulation-cell division (RND) (TC 2.A.6) family. MmpL subfamily.

It localises to the cell membrane. This is Membrane protein YdfJ (ydfJ) from Bacillus subtilis (strain 168).